A 571-amino-acid polypeptide reads, in one-letter code: MDTKKEIKNNNFICQIINKDLNENKNLSFYTRFPPEPNGYLHIGHAKSICLNFELASLYKGRCNLRFDDTNPLKENIKYIKSIKYDINWLGYKWHGNVRYASEYFLKLYQYAQELIKKGLAYVDHLTKEQIREYRGTLNTPGKNSPYRNRTIQENIELFEKMKKGDFSEGEACLRAKINMSSSSIIMRDPVLYRIIFIKHHQTQNKWCIYPMYDFAHCLSDSIEGITHSLCTLEFQDNKFLYNWILKNTSVKHYPKQYEFSRLNLEFSILSKRKIKILIDKNIIEGWDDPRIPTLSALRRKGYTPSSIKNFCQKIGVTKQNNLIEFSMLEHCIRKELNQTAIRTMAILDPIKIFLYNLDSNYKEEFIVPNHPNNPEMGTHKIIFTNTIYIDRSDFKEKYDKKYKRLKLGEKIRLRYSYIIHAEKIEKDEYGNISNIICYCDLNTLGRKPKDNKNPAVIHWISEKNTLSAEFKLYDQLFNIKNPEQQENFLLYINSKSLIKKFGFIEKKIGEEIQKKISNNNIEIFFQFERIGYFCIDFIDSKKNQLVFNRTVGLRDTWDSKKIKTKNITNN.

The 'HIGH' region signature appears at 35 to 45; that stretch reads PEPNGYLHIGH. Residues 36 to 38 and 42 to 48 each bind ATP; these read EPN and HIGHAKS. 2 residues coordinate L-glutamine: Asp68 and Tyr213. ATP-binding positions include Thr232, 262–263, and 270–272; these read RL and LSK. Positions 269–273 match the 'KMSKS' region motif; that stretch reads ILSKR.

This sequence belongs to the class-I aminoacyl-tRNA synthetase family. As to quaternary structure, monomer.

The protein localises to the cytoplasm. It catalyses the reaction tRNA(Gln) + L-glutamine + ATP = L-glutaminyl-tRNA(Gln) + AMP + diphosphate. In Buchnera aphidicola subsp. Acyrthosiphon pisum (strain 5A), this protein is Glutamine--tRNA ligase.